Reading from the N-terminus, the 160-residue chain is Probable nucleoside diphosphate kinase DDB_G0292928 (160 aa).

ATP is bound by residues Lys12, Phe61, Arg103, Thr109, Arg122, and Asn132. Residue His135 is the Pros-phosphohistidine intermediate of the active site.

Belongs to the NDK family. Mg(2+) serves as cofactor.

The enzyme catalyses a 2'-deoxyribonucleoside 5'-diphosphate + ATP = a 2'-deoxyribonucleoside 5'-triphosphate + ADP. It carries out the reaction a ribonucleoside 5'-diphosphate + ATP = a ribonucleoside 5'-triphosphate + ADP. The sequence is that of Probable nucleoside diphosphate kinase DDB_G0292928 from Dictyostelium discoideum (Social amoeba).